We begin with the raw amino-acid sequence, 62 residues long: Large ribosomal subunit protein bL28 (62 aa).

The protein belongs to the bacterial ribosomal protein bL28 family.

This chain is Large ribosomal subunit protein bL28, found in Frankia casuarinae (strain DSM 45818 / CECT 9043 / HFP020203 / CcI3).